The chain runs to 170 residues: Small ribosomal subunit protein bS16 (170 aa).

The segment at 114 to 170 is disordered; it reads EGGPTTEAAKPKKKAATSGAKKAAKAAEPEAAAPEAAEPEAAAPAEGGEQAESSTES. Positions 142–170 are enriched in low complexity; it reads PEAAAPEAAEPEAAAPAEGGEQAESSTES.

This sequence belongs to the bacterial ribosomal protein bS16 family.

The chain is Small ribosomal subunit protein bS16 from Mycobacterium avium (strain 104).